A 273-amino-acid chain; its full sequence is MTTPTLIVTPPSPPAPSYSANRVPQPSLMDKIKKIAAIASLILIGTIGFLALLGHLVGFLIAPQITIVLLALFITSLAGNALYLQKTANLHLYQDLQREVGSLKEINFMLSVLQKEFLHLSKEFATTSKDLSAVSQDFYSCLQGFRDNYKGFESLLDEYKNSTEEMRKLFSQEIIADLKGSVASLREEIRFLTPLAEEVRRLAHNQESLTAAIEELKTIRDSLRDEIGQLSQLSKTLTSQIALQRKESSDLCSQIRETLSSPRKSASPSTKSS.

Positions 1-20 are disordered; sequence MTTPTLIVTPPSPPAPSYSA. Transmembrane regions (helical) follow at residues 41–61 and 64–84; these read LILI…GFLI and QITI…ALYL. Residues 206–233 are a coiled coil; it reads QESLTAAIEELKTIRDSLRDEIGQLSQL. The interval 253-273 is disordered; that stretch reads SQIRETLSSPRKSASPSTKSS.

Belongs to the IncA family. May form homodimers via its C-terminus. Forms homodimers, and probably higher-order oligomers.

The protein localises to the secreted. It is found in the host vacuole. Its subcellular location is the host pathogen-containing vacuole. The protein resides in the host pathogen-containing vacuole membrane. Its function is as follows. Chlamydia replicate within a host intracellular vacuole, termed an inclusion, which is formed by fusion of many smaller inclusion bodies. IncA may be involved in the homotypic fusion of inclusions; injection of anti-IncA antibodies prevents homotypic fusion, but not fusion with exocytic vesicles. The protein is Inclusion membrane protein A (incA) of Chlamydia trachomatis serovar L2 (strain ATCC VR-902B / DSM 19102 / 434/Bu).